A 175-amino-acid polypeptide reads, in one-letter code: NADH-ubiquinone oxidoreductase chain 6 (175 aa).

5 helical membrane-spanning segments follow: residues 1 to 21 (MMTYIVFILSIVFVMSFVGFA), 25 to 45 (SPIYGGLVLIISGGIGCAIVL), 47 to 67 (FGGSFLGLMVFLIYLGGMLVV), 88 to 108 (AVLAAFITGLLSELLTACYIL), and 149 to 169 (YGTWLVVVTGWSLLIGVLVIM).

This sequence belongs to the complex I subunit 6 family. Core subunit of respiratory chain NADH dehydrogenase (Complex I) which is composed of 45 different subunits.

Its subcellular location is the mitochondrion inner membrane. The enzyme catalyses a ubiquinone + NADH + 5 H(+)(in) = a ubiquinol + NAD(+) + 4 H(+)(out). In terms of biological role, core subunit of the mitochondrial membrane respiratory chain NADH dehydrogenase (Complex I) which catalyzes electron transfer from NADH through the respiratory chain, using ubiquinone as an electron acceptor. Essential for the catalytic activity and assembly of complex I. This is NADH-ubiquinone oxidoreductase chain 6 (MT-ND6) from Canis lupus familiaris (Dog).